Here is a 399-residue protein sequence, read N- to C-terminus: S-adenosylmethionine synthase (399 aa).

H17 provides a ligand contact to ATP. D19 is a binding site for Mg(2+). Residue E45 participates in K(+) binding. L-methionine is bound by residues E58 and Q101. The interval 101–111 (QSPDIAQGVDE) is flexible loop. ATP is bound by residues 177–179 (DAK), 244–245 (RF), D253, 259–260 (RK), A276, and K280. D253 lines the L-methionine pocket. Residue K284 participates in L-methionine binding.

Belongs to the AdoMet synthase family. Homotetramer; dimer of dimers. The cofactor is Mg(2+). K(+) is required as a cofactor.

The protein resides in the cytoplasm. It carries out the reaction L-methionine + ATP + H2O = S-adenosyl-L-methionine + phosphate + diphosphate. The protein operates within amino-acid biosynthesis; S-adenosyl-L-methionine biosynthesis; S-adenosyl-L-methionine from L-methionine: step 1/1. Catalyzes the formation of S-adenosylmethionine (AdoMet) from methionine and ATP. The overall synthetic reaction is composed of two sequential steps, AdoMet formation and the subsequent tripolyphosphate hydrolysis which occurs prior to release of AdoMet from the enzyme. This chain is S-adenosylmethionine synthase, found in Listeria monocytogenes serovar 1/2a (strain ATCC BAA-679 / EGD-e).